The primary structure comprises 184 residues: MKKQDISVKTVVAIGIGAAVFVILGRFVVIPTGFPNTNIETSYAFLALISAIFGPFAGLMTGLVGHAIKDFTTYGSAWWSWVICSGIIGCLYGWIGLKLNLSSGRFSRKSMIYFNIGQIIANIICWALIAPTLDILIYNEPANKVYTQGVISAVLNIISVGIIGTILLKAYASSQIKKGSLRKK.

5 helical membrane-spanning segments follow: residues 11 to 31, 44 to 64, 77 to 97, 111 to 131, and 148 to 168; these read VVAIGIGAAVFVILGRFVVIP, AFLALISAIFGPFAGLMTGLV, AWWSWVICSGIIGCLYGWIGL, MIYFNIGQIIANIICWALIAP, and QGVISAVLNIISVGIIGTILL.

The protein belongs to the UPF0397 family.

Its subcellular location is the cell membrane. The polypeptide is UPF0397 protein SAB2561c (Staphylococcus aureus (strain bovine RF122 / ET3-1)).